A 209-amino-acid chain; its full sequence is Ribosomal RNA large subunit methyltransferase E (209 aa).

S-adenosyl-L-methionine contacts are provided by glycine 63, tryptophan 65, aspartate 83, aspartate 99, and aspartate 124. The active-site Proton acceptor is lysine 164.

It belongs to the class I-like SAM-binding methyltransferase superfamily. RNA methyltransferase RlmE family.

Its subcellular location is the cytoplasm. It carries out the reaction uridine(2552) in 23S rRNA + S-adenosyl-L-methionine = 2'-O-methyluridine(2552) in 23S rRNA + S-adenosyl-L-homocysteine + H(+). Functionally, specifically methylates the uridine in position 2552 of 23S rRNA at the 2'-O position of the ribose in the fully assembled 50S ribosomal subunit. The polypeptide is Ribosomal RNA large subunit methyltransferase E (Serratia proteamaculans (strain 568)).